The chain runs to 312 residues: NAD-dependent protein deacylase Sirt4 (312 aa).

A mitochondrion-targeting transit peptide spans 1 to 16; sequence MRVGQLLRFRSTSLRS. One can recognise a Deacetylase sirtuin-type domain in the interval 28-312; it reads KPVVEDDIKR…FDFRNSKSVS (285 aa). NAD(+)-binding positions include 53–73 and 134–137; these read GAGISTESGIPDYRSEGVGLY and QNVD. The active-site Proton acceptor is the histidine 152. Residues cysteine 160, cysteine 163, cysteine 211, and cysteine 214 each contribute to the Zn(2+) site. NAD(+)-binding positions include 251 to 253, 277 to 279, and cysteine 295; these read GSS and NIG.

This sequence belongs to the sirtuin family. Class II subfamily. Zn(2+) is required as a cofactor.

Its subcellular location is the mitochondrion matrix. It carries out the reaction N(6)-acetyl-L-lysyl-[protein] + NAD(+) + H2O = 2''-O-acetyl-ADP-D-ribose + nicotinamide + L-lysyl-[protein]. In terms of biological role, NAD-dependent protein deacylase. Catalyzes the NAD-dependent hydrolysis of acyl groups from lysine residues. In Drosophila melanogaster (Fruit fly), this protein is NAD-dependent protein deacylase Sirt4 (Sirt4).